Here is a 316-residue protein sequence, read N- to C-terminus: Apolipoprotein E (316 aa).

The first 18 residues, 1–18 (MKVLWVALVITLLAGCQA), serve as a signal peptide directing secretion. Repeat copies occupy residues 79–100 (VLMD…GQLA), 101–122 (PIAQ…ARLA), 123–144 (SDME…AMMG), 145–166 (QTTD…KRLL), 167–188 (RDAE…EGSE), 189–210 (RSVS…ARAA), 211–232 (TVGT…QKLR), and 233–254 (GRVE…EQLE). The tract at residues 79–254 (VLMDETMKEV…HLEEMREQLE (176 aa)) is 8 X 22 AA approximate tandem repeats. Met142 carries the methionine sulfoxide modification. The segment at 157–167 (HLRKLRKRLLR) is LDL and other lipoprotein receptors binding. 161 to 164 (LRKR) is a binding site for heparin. A lipid-binding and lipoprotein association region spans residues 209–289 (AATVGTLASQ…SWFEPLVEDM (81 aa)). 228-235 (HQKLRGRV) contributes to the heparin binding site. The homooligomerization stretch occupies residues 265–316 (SQMRLQAEAFQARLKSWFEPLVEDMQRQWAGLVEKVQLAMATSSTSAPSENH). The segment at 277–289 (RLKSWFEPLVEDM) is specificity for association with VLDL.

This sequence belongs to the apolipoprotein A1/A4/E family. In terms of assembly, homotetramer. May interact with ABCA1; functionally associated with ABCA1 in the biogenesis of HDLs. May interact with APP/A4 amyloid-beta peptide; the interaction is extremely stable in vitro but its physiological significance is unclear. May interact with MAPT. May interact with MAP2. In the cerebrospinal fluid, interacts with secreted SORL1. Interacts with PMEL; this allows the loading of PMEL luminal fragment on ILVs to induce fibril nucleation. In terms of processing, APOE exists as multiple glycosylated and sialylated glycoforms within cells and in plasma. The extent of glycosylation and sialylation are tissue and context specific. Glycated in plasma VLDL. Post-translationally, phosphorylated by FAM20C in the extracellular medium.

It localises to the secreted. It is found in the extracellular space. The protein localises to the extracellular matrix. Its subcellular location is the extracellular vesicle. The protein resides in the endosome. It localises to the multivesicular body. APOE is an apolipoprotein, a protein associating with lipid particles, that mainly functions in lipoprotein-mediated lipid transport between organs via the plasma and interstitial fluids. APOE is a core component of plasma lipoproteins and is involved in their production, conversion and clearance. Apolipoproteins are amphipathic molecules that interact both with lipids of the lipoprotein particle core and the aqueous environment of the plasma. As such, APOE associates with chylomicrons, chylomicron remnants, very low density lipoproteins (VLDL) and intermediate density lipoproteins (IDL) but shows a preferential binding to high-density lipoproteins (HDL). It also binds a wide range of cellular receptors including the LDL receptor/LDLR and the very low-density lipoprotein receptor/VLDLR that mediate the cellular uptake of the APOE-containing lipoprotein particles. Finally, APOE also has a heparin-binding activity and binds heparan-sulfate proteoglycans on the surface of cells, a property that supports the capture and the receptor-mediated uptake of APOE-containing lipoproteins by cells. This is Apolipoprotein E (APOE) from Lipotes vexillifer (Yangtze river dolphin).